The following is a 505-amino-acid chain: Lysine--tRNA ligase 1 (505 aa).

Mg(2+) is bound by residues aspartate 415 and glutamate 422.

The protein belongs to the class-II aminoacyl-tRNA synthetase family. Homodimer. Mg(2+) serves as cofactor.

The protein localises to the cytoplasm. It catalyses the reaction tRNA(Lys) + L-lysine + ATP = L-lysyl-tRNA(Lys) + AMP + diphosphate. The protein is Lysine--tRNA ligase 1 (lysS1) of Mycobacterium bovis (strain ATCC BAA-935 / AF2122/97).